Here is a 193-residue protein sequence, read N- to C-terminus: Acyl carrier protein phosphodiesterase (193 aa).

It belongs to the AcpH family.

It catalyses the reaction holo-[ACP] + H2O = apo-[ACP] + (R)-4'-phosphopantetheine + H(+). Converts holo-ACP to apo-ACP by hydrolytic cleavage of the phosphopantetheine prosthetic group from ACP. This chain is Acyl carrier protein phosphodiesterase, found in Salmonella agona (strain SL483).